A 423-amino-acid polypeptide reads, in one-letter code: uncharacterized protein (423 aa).

Lys-181, Asp-183, and Glu-184 together coordinate Mg(2+). At Lys-181 the chain carries N6-carboxylysine.

The protein belongs to the RuBisCO large chain family. Type IV subfamily. The cofactor is Mg(2+).

Functionally, may be involved in sulfur metabolism and oxidative stress response. Does not show RuBisCO activity. This is an uncharacterized protein from Bordetella bronchiseptica (strain ATCC BAA-588 / NCTC 13252 / RB50) (Alcaligenes bronchisepticus).